Here is a 221-residue protein sequence, read N- to C-terminus: Octanoyltransferase (221 aa).

Residues 31 to 216 (GQIGDTLLLL…SLCAIFDLRP (186 aa)) form the BPL/LPL catalytic domain. Residues 76 to 83 (RGGEVTYH), 145 to 147 (AIG), and 159 to 161 (GLA) contribute to the substrate site. Catalysis depends on Cys-177, which acts as the Acyl-thioester intermediate.

It belongs to the LipB family.

The protein resides in the cytoplasm. It catalyses the reaction octanoyl-[ACP] + L-lysyl-[protein] = N(6)-octanoyl-L-lysyl-[protein] + holo-[ACP] + H(+). It functions in the pathway protein modification; protein lipoylation via endogenous pathway; protein N(6)-(lipoyl)lysine from octanoyl-[acyl-carrier-protein]: step 1/2. Its function is as follows. Catalyzes the transfer of endogenously produced octanoic acid from octanoyl-acyl-carrier-protein onto the lipoyl domains of lipoate-dependent enzymes. Lipoyl-ACP can also act as a substrate although octanoyl-ACP is likely to be the physiological substrate. The chain is Octanoyltransferase from Chloroflexus aggregans (strain MD-66 / DSM 9485).